The primary structure comprises 446 residues: Iroquois homeobox protein 5a (446 aa).

A DNA-binding region (homeobox) is located at residues 117-173 (NATRDATATLKAWLNEHRKNPYPTKGEKIMLAIITKMTLTQVSTWFANARRRLKKEN). Residues 175–312 (MTWTPRNRSE…IHSPPSAPKP (138 aa)) form a disordered region. Acidic residues predominate over residues 184–201 (EDEEEDENIDLEKNDDDE). 2 stretches are compositionally biased toward basic and acidic residues: residues 202 to 220 (PNKP…DHKL) and 227 to 258 (PCDR…RTDL). Composition is skewed to polar residues over residues 264-274 (KPTTSSPSVLQ) and 293-303 (STGNSNVTSVI).

Belongs to the TALE/IRO homeobox family.

It localises to the nucleus. Its function is as follows. Transcription factor. Binds to consensus iroquois binding site (IBS) motifs 5'-ACANNTGT-3' or 5'-ACANNNTGT-3' in regulatory elements of target genes. Required, together with irx7, for hyoid joint formation; they act cell autonomously to repress expression of cartilage matrix genes, such as collagen col2a1a, within immature chondrocytes of the joint interzone. May compete with or modify Sox9a activity, thereby reducing Sox9a-mediated activation of col2a1a. Probably acts in the developing hyoid joint downstream of Bmp signaling. In concert with irx6a, plays a role in visual performance. The sequence is that of Iroquois homeobox protein 5a (irx5a) from Danio rerio (Zebrafish).